The chain runs to 327 residues: MNSVRTDLAVEAREMYCEKTENGDNGVRVDTKRIEDIEITTVDVLNDKGEERIRKQKGTYITLDIPKVTLYDSEDIEEISKVFADELSKIISKAKLDSSMTVLVVGLGNWNITPDSLGPKVIGKLMVTRHLKKYIPDSIDEGIRPVCAVAPGVLGITGMETGEIIRGIVQNIKPDLIVCIDALAARKMGRVNSTIQIGNTGISPGSGVGNMRMELSQKTLGVPVIAVGVPTVVDAATMANDTIDIVIEKMKGEVSEDSKFYSLLKAIDTEEKSQLIYEVLNPYVGDLLVTPKEVDMIMETLSKIIASGINIALQPALELSEINKYVN.

Residues 1–7 (MNSVRTD) constitute a propeptide that is removed on maturation.

It belongs to the peptidase A25 family. In terms of assembly, homotetramer. Post-translationally, autoproteolytically processed. The inactive tetrameric zymogen termed p46 autoprocesses to a smaller form termed p41, which is active only during spore germination.

The catalysed reaction is Endopeptidase action with P4 Glu or Asp, P1 preferably Glu &gt; Asp, P1' hydrophobic and P2' Ala.. In terms of biological role, initiates the rapid degradation of small, acid-soluble proteins during spore germination. This chain is Germination protease, found in Clostridium acetobutylicum (strain ATCC 824 / DSM 792 / JCM 1419 / IAM 19013 / LMG 5710 / NBRC 13948 / NRRL B-527 / VKM B-1787 / 2291 / W).